The primary structure comprises 326 residues: Bifunctional pinoresinol-lariciresinol reductase (326 aa).

NADP(+) contacts are provided by residues 25–31 (GGTGYLG), arginine 50, and lysine 59. Catalysis depends on lysine 153, which acts as the Proton acceptor. Position 157 (arginine 157) interacts with NADP(+). Residue histidine 285 participates in substrate binding.

The protein belongs to the NmrA-type oxidoreductase family. Isoflavone reductase subfamily. Dimer.

It carries out the reaction (+)-lariciresinol + NADP(+) = (+)-pinoresinol + NADPH + H(+). It catalyses the reaction (-)-secoisolariciresinol + NADP(+) = (+)-lariciresinol + NADPH + H(+). Functionally, reductase involved in lignan biosynthesis. Catalyzes the enantioselective conversion of (+)-pinoresinol into (+)-lariciresinol and of (+)-lariciresinol into (-)-secoisolariciresinol. Abstracts the 4R-hydride from the NADPH cofactor during catalysis. This is Bifunctional pinoresinol-lariciresinol reductase (PLR1) from Linum album (Flax).